The chain runs to 160 residues: Protein cornichon homolog 2 (160 aa).

Residues 1–10 (MAFTFAAFCY) lie on the Cytoplasmic side of the membrane. A helical transmembrane segment spans residues 11-31 (MLTLVLCASLIFFVIWHIIAF). The Lumenal segment spans residues 32–72 (DELRTDFKNPIDQGNPARARERLKNIERICCLLRKLVVPEY). The helical transmembrane segment at 73–93 (CIHGLFCLMFLCAAEWVTLGL) threads the bilayer. Topologically, residues 94-138 (NLPLLLYHLWRYFHRPSDGSEGLFDAVSIMDADILGYCQKEAWCK) are cytoplasmic. Residues 139-159 (LAFYLLSFFYYLYSMVYTLVS) form a helical membrane-spanning segment. F160 is a topological domain (lumenal).

This sequence belongs to the cornichon family. Interacts with HBEGF. In terms of tissue distribution, expressed in the odd-numbered neuromeres (r3 and r5) of the developing hindbrain.

Its subcellular location is the membrane. Functionally, regulates the trafficking and gating properties of AMPA-selective glutamate receptors (AMPARs). Plays an important role in the proper development of cranial nerves by facilitating the secretion of HBEGF. The protein is Protein cornichon homolog 2 (CNIH2) of Gallus gallus (Chicken).